Consider the following 293-residue polypeptide: Small ribosomal subunit biogenesis GTPase RsgA 2 (293 aa).

The region spanning 63–223 (SNELVRPPIA…VADTPGFSVL (161 aa)) is the CP-type G domain. Residues 112-115 (TKVD) and 166-174 (GQSGVGKSS) contribute to the GTP site. Cys-247, Cys-252, His-254, and Cys-260 together coordinate Zn(2+).

This sequence belongs to the TRAFAC class YlqF/YawG GTPase family. RsgA subfamily. As to quaternary structure, monomer. Associates with 30S ribosomal subunit, binds 16S rRNA. The cofactor is Zn(2+).

It localises to the cytoplasm. In terms of biological role, one of several proteins that assist in the late maturation steps of the functional core of the 30S ribosomal subunit. Helps release RbfA from mature subunits. May play a role in the assembly of ribosomal proteins into the subunit. Circularly permuted GTPase that catalyzes slow GTP hydrolysis, GTPase activity is stimulated by the 30S ribosomal subunit. The sequence is that of Small ribosomal subunit biogenesis GTPase RsgA 2 from Oceanobacillus iheyensis (strain DSM 14371 / CIP 107618 / JCM 11309 / KCTC 3954 / HTE831).